Reading from the N-terminus, the 196-residue chain is Charged multivesicular body protein 1a (196 aa).

Positions 5 to 41 form a coiled coil; sequence LFQLKFTAKQLEKLAKKAEKDSNTEQAKVKKALQQKN. Residues 170–181 show a composition bias toward polar residues; the sequence is QGASSVGESSTR. Positions 170-196 are disordered; it reads QGASSVGESSTRTQEDQLSRRLASLRN. The short motif at 185 to 195 is the MIT-interacting motif element; that stretch reads DQLSRRLASLR.

Belongs to the SNF7 family. In terms of assembly, probable peripherally associated component of the endosomal sorting required for transport complex III (ESCRT-III).

The protein resides in the cytoplasm. Its subcellular location is the endosome membrane. Its function is as follows. Probable peripherally associated component of the endosomal sorting required for transport complex III (ESCRT-III) which is involved in multivesicular bodies (MVBs) formation and sorting of endosomal cargo proteins into MVBs. MVBs contain intraluminal vesicles (ILVs) that are generated by invagination and scission from the limiting membrane of the endosome and mostly are delivered to lysosomes enabling degradation of membrane proteins, such as stimulated growth factor receptors, lysosomal enzymes and lipids. The chain is Charged multivesicular body protein 1a (chmp1a) from Xenopus laevis (African clawed frog).